A 509-amino-acid chain; its full sequence is Cobyric acid synthase (509 aa).

Positions 262–459 (EIKVGIIKLP…IHGIFENDSW (198 aa)) constitute a GATase cobBQ-type domain. Cys343 acts as the Nucleophile in catalysis. His451 is a catalytic residue.

Belongs to the CobB/CobQ family. CobQ subfamily.

It functions in the pathway cofactor biosynthesis; adenosylcobalamin biosynthesis. In terms of biological role, catalyzes amidations at positions B, D, E, and G on adenosylcobyrinic A,C-diamide. NH(2) groups are provided by glutamine, and one molecule of ATP is hydrogenolyzed for each amidation. The chain is Cobyric acid synthase from Prochlorococcus marinus (strain MIT 9215).